Here is a 271-residue protein sequence, read N- to C-terminus: Orotidine 5'-phosphate decarboxylase (271 aa).

Residue lysine 95 is the Proton donor of the active site.

The protein belongs to the OMP decarboxylase family. Type 2 subfamily.

It carries out the reaction orotidine 5'-phosphate + H(+) = UMP + CO2. It participates in pyrimidine metabolism; UMP biosynthesis via de novo pathway; UMP from orotate: step 2/2. This Ralstonia nicotianae (strain ATCC BAA-1114 / GMI1000) (Ralstonia solanacearum) protein is Orotidine 5'-phosphate decarboxylase (pyrF).